Reading from the N-terminus, the 244-residue chain is 5-oxoprolinase subunit A (244 aa).

It belongs to the LamB/PxpA family. In terms of assembly, forms a complex composed of PxpA, PxpB and PxpC.

The catalysed reaction is 5-oxo-L-proline + ATP + 2 H2O = L-glutamate + ADP + phosphate + H(+). Functionally, catalyzes the cleavage of 5-oxoproline to form L-glutamate coupled to the hydrolysis of ATP to ADP and inorganic phosphate. This chain is 5-oxoprolinase subunit A, found in Salmonella arizonae (strain ATCC BAA-731 / CDC346-86 / RSK2980).